We begin with the raw amino-acid sequence, 226 residues long: N-(5'-phosphoribosyl)anthranilate isomerase 2 (226 aa).

Belongs to the TrpF family.

The catalysed reaction is N-(5-phospho-beta-D-ribosyl)anthranilate = 1-(2-carboxyphenylamino)-1-deoxy-D-ribulose 5-phosphate. The protein operates within amino-acid biosynthesis; L-tryptophan biosynthesis; L-tryptophan from chorismate: step 3/5. The sequence is that of N-(5'-phosphoribosyl)anthranilate isomerase 2 (trpF2) from Methanosarcina mazei (strain ATCC BAA-159 / DSM 3647 / Goe1 / Go1 / JCM 11833 / OCM 88) (Methanosarcina frisia).